The primary structure comprises 151 residues: MFRGANAISLDAKGRLAMPSRYRDELVSRCAGQLIVTIDAVDPCLTVYPLPEWELIEAKLRELPSLREETRRLQRLLIGNAVDLELDGNGRFLIPPRLREYAKLDKRAMLVGQLNKFQLWDEDAWNAMAEADLAAIKQPGGLPDELRDLIL.

2 SpoVT-AbrB domains span residues 5–52 and 81–124; these read ANAI…PLPE and AVDL…DEDA.

The protein belongs to the MraZ family. In terms of assembly, forms oligomers.

The protein resides in the cytoplasm. It is found in the nucleoid. This is Transcriptional regulator MraZ from Pseudomonas aeruginosa (strain LESB58).